We begin with the raw amino-acid sequence, 488 residues long: Glutamyl-tRNA(Gln) amidotransferase subunit A (488 aa).

Catalysis depends on charge relay system residues lysine 77 and serine 152. Serine 176 serves as the catalytic Acyl-ester intermediate.

The protein belongs to the amidase family. GatA subfamily. Heterotrimer of A, B and C subunits.

The catalysed reaction is L-glutamyl-tRNA(Gln) + L-glutamine + ATP + H2O = L-glutaminyl-tRNA(Gln) + L-glutamate + ADP + phosphate + H(+). Functionally, allows the formation of correctly charged Gln-tRNA(Gln) through the transamidation of misacylated Glu-tRNA(Gln) in organisms which lack glutaminyl-tRNA synthetase. The reaction takes place in the presence of glutamine and ATP through an activated gamma-phospho-Glu-tRNA(Gln). This chain is Glutamyl-tRNA(Gln) amidotransferase subunit A, found in Streptococcus pneumoniae (strain Hungary19A-6).